The primary structure comprises 437 residues: MTVLRSMKDFSSMNITASILLFVTAIAAAVIANSPAASVYQEFLSHELHFRIGGFNLLSHAGHNLTMIEFINDGLMTIFFLMVGLEIKRELLVGELSSFRKAALPFIAACGGMVVPVVIYSMVCAPGTEGGQGLAIPMATDIAFSLGVLSLLGKRVPLSLKIFLTAFAVVDDIGGILVIAIFYSSHVAYEYLLWAALLYVLLYFIGKKGATNKIFFLVVGVVIWYLFLQSGIHSTISGVILAFVIPAKPQLNVGTYIERIRRIISTFPEMGANNIVLTNQQIAKLKEVESASDRVISPLQSLEDNLHGAVNYLVLPLFAFVNAGVMFSGEGEVIGGVTLAVALGLLAGKFLGIYSFTWLAVKSGLTPMPLGMNWKNISGVALLGGIGFTVSLFIANLSFGSAHPVLLNQAKLGVLSGTVMAGILGYLVLHWVLPKRR.

Helical transmembrane passes span 12–32 (SMNITASILLFVTAIAAAVIA), 65–85 (LTMIEFINDGLMTIFFLMVGL), 103–123 (ALPFIAACGGMVVPVVIYSMV), 133–153 (GLAIPMATDIAFSLGVLSLLG), 162–182 (IFLTAFAVVDDIGGILVIAIF), 186–206 (HVAYEYLLWAALLYVLLYFIG), 214–234 (IFFLVVGVVIWYLFLQSGIHS), 308–328 (GAVNYLVLPLFAFVNAGVMFS), 333–353 (VIGGVTLAVALGLLAGKFLGI), 377–397 (ISGVALLGGIGFTVSLFIANL), and 412–432 (LGVLSGTVMAGILGYLVLHWV).

Belongs to the NhaA Na(+)/H(+) (TC 2.A.33) antiporter family.

It localises to the cell inner membrane. The enzyme catalyses Na(+)(in) + 2 H(+)(out) = Na(+)(out) + 2 H(+)(in). Functionally, na(+)/H(+) antiporter that extrudes sodium in exchange for external protons. The sequence is that of Na(+)/H(+) antiporter NhaA from Bacteroides fragilis (strain ATCC 25285 / DSM 2151 / CCUG 4856 / JCM 11019 / LMG 10263 / NCTC 9343 / Onslow / VPI 2553 / EN-2).